The sequence spans 1102 residues: Endocytosis protein end4 (1102 aa).

The ENTH domain maps to 9-139 (DHMQSDASLM…SFHAQHPEFN (131 aa)). The disordered stretch occupies residues 265-334 (PHDPPDLEGD…SEPEPIQDFW (70 aa)). A compositionally biased stretch (polar residues) spans 292–305 (TGASTIAPQPTGTS). Residues 338-661 (TLDQQLAAQQ…ESLLQLSKLQ (324 aa)) adopt a coiled-coil conformation. Positions 858 to 1100 (LLNAPGENIE…DMRKTSYHVA (243 aa)) constitute an I/LWEQ domain.

It belongs to the SLA2 family.

Its subcellular location is the cytoplasm. It is found in the cytoskeleton. Its function is as follows. Required for cellular morphogenesis and polarization of the cortical cytoskeleton. Required for establishment of new polarized growth zones where it acts in actin organization. Involved plasma membrane internalization and is essential for fluid-phase endocytosis. The polypeptide is Endocytosis protein end4 (end4) (Schizosaccharomyces pombe (strain 972 / ATCC 24843) (Fission yeast)).